The primary structure comprises 269 residues: 4-hydroxy-tetrahydrodipicolinate reductase (269 aa).

NAD(+)-binding positions include 11–16 (GASGRM) and E37. R38 serves as a coordination point for NADP(+). Residues 101–103 (GTT) and 125–128 (AGNM) each bind NAD(+). Catalysis depends on H158, which acts as the Proton donor/acceptor. A (S)-2,3,4,5-tetrahydrodipicolinate-binding site is contributed by H159. K162 serves as the catalytic Proton donor. 168–169 (GT) contributes to the (S)-2,3,4,5-tetrahydrodipicolinate binding site.

This sequence belongs to the DapB family.

It is found in the cytoplasm. It catalyses the reaction (S)-2,3,4,5-tetrahydrodipicolinate + NAD(+) + H2O = (2S,4S)-4-hydroxy-2,3,4,5-tetrahydrodipicolinate + NADH + H(+). The enzyme catalyses (S)-2,3,4,5-tetrahydrodipicolinate + NADP(+) + H2O = (2S,4S)-4-hydroxy-2,3,4,5-tetrahydrodipicolinate + NADPH + H(+). Its pathway is amino-acid biosynthesis; L-lysine biosynthesis via DAP pathway; (S)-tetrahydrodipicolinate from L-aspartate: step 4/4. Functionally, catalyzes the conversion of 4-hydroxy-tetrahydrodipicolinate (HTPA) to tetrahydrodipicolinate. This chain is 4-hydroxy-tetrahydrodipicolinate reductase, found in Ruegeria pomeroyi (strain ATCC 700808 / DSM 15171 / DSS-3) (Silicibacter pomeroyi).